A 575-amino-acid chain; its full sequence is Pre-hexon-linking protein IIIa (575 aa).

Residues 1–95 (MTSSDTFLAL…DLLNRAYTWN (95 aa)) form a peripentonal hexon-tethering domain region. Residues 129-243 (ANASLLTQFF…FYDYGAMEPG (115 aa)) are binding to hexon-linking protein. Position 497 is a phosphoserine; by host (S497). Residues 515-575 (GGPGFFASLR…SRRGRKLRFY (61 aa)) constitute a propeptide that is removed on maturation. Positions 525–549 (PSIGSRQPTGTAVGLRPTTPYSGSG) are disordered.

This sequence belongs to the adenoviridae hexon-linking protein IIIa family. As to quaternary structure, interacts with hexon proteins; this interaction tethers the peripentonal hexons to hexons situated in the facet. Interacts with the penton protein (via N-terminus). Interacts with packaging protein 3; this interaction is required to promote correct genome packaging. Cleaved near the C-terminus by the viral protease during virion maturation to form the mature protein.

It is found in the virion. It localises to the host nucleus. Structural component of the virion that acts as a cement protein on the capsid exterior which mediates the interactions between the hexons, including the peripentonal hexons, and reaches all the way to the penton vertices. Two hexon linking proteins IIIa, one from each facet, stabilize the unique edge interface between a pair of facets. As the virus enters the host cell, hexon linking proteins IIIa are shed concomitant with virion acidification in the endosome. During virus assembly, seems to play a role in the serotype specificity of the packaging of viral DNA via its interaction with packaging protein 3. The chain is Pre-hexon-linking protein IIIa from Galliformes (FAdV-1).